Here is a 223-residue protein sequence, read N- to C-terminus: MTQDQLKQAVAQAAVDLILPKLDDKSIVGVGTGSTANCFIDALALHKGTFDGAVASSEATAARLKGHGIPVYELNTVSDLEFYIDGADESDEHLNLIKGGGAALTREKIVAAVAKTFICIADASKLVPVLGNFPLPVEVIPMARSHVARELVKLGGDPVYREGVITDNGNIILDVHNMQITNPVELESQINAIVGVVTNGLFAARPADVLLLGTAEGVKTLKA.

Residues 32–35 (TGST), 85–88 (DGAD), and 98–101 (KGGG) contribute to the substrate site. Glutamate 107 serves as the catalytic Proton acceptor. Lysine 125 lines the substrate pocket.

This sequence belongs to the ribose 5-phosphate isomerase family. As to quaternary structure, homodimer.

It catalyses the reaction aldehydo-D-ribose 5-phosphate = D-ribulose 5-phosphate. The protein operates within carbohydrate degradation; pentose phosphate pathway; D-ribose 5-phosphate from D-ribulose 5-phosphate (non-oxidative stage): step 1/1. Its function is as follows. Catalyzes the reversible conversion of ribose-5-phosphate to ribulose 5-phosphate. This chain is Ribose-5-phosphate isomerase A, found in Pseudomonas fluorescens (strain ATCC BAA-477 / NRRL B-23932 / Pf-5).